The following is a 1931-amino-acid chain: Chitin synthase 5 (1931 aa).

In terms of domain architecture, Myosin motor spans 11–777 (LGVTDLSSLA…LFRFLEDRLR (767 aa)). 122 to 129 (GPTGSGKS) lines the ATP pocket. N-linked (GlcNAc...) asparagine glycans are attached at residues N510, N538, and N676. Positions 655-677 (VDSLLKSFDQTQTWYIFALRPND) are actin-binding. The tract at residues 798–817 (DPFSPHRYQPTSFDSQDHVY) is disordered. Residue N842 is glycosylated (N-linked (GlcNAc...) asparagine). The next 2 membrane-spanning stretches (helical) occupy residues 912 to 932 (WVWLCSILTWWIPGFLLSKIA) and 951 to 971 (MIIWFICGCAIFVIAILGPVI). Residues N1062, N1078, and N1146 are each glycosylated (N-linked (GlcNAc...) asparagine). The helical transmembrane segment at 1220–1240 (ILLALSCVMVAVIGFKFLSAL) threads the bilayer. The N-linked (GlcNAc...) asparagine glycan is linked to N1583. The next 3 membrane-spanning stretches (helical) occupy residues 1615–1635 (LSTIIAPVTVAYIVYLIYLIV), 1641–1661 (IPTLSIIMLAAIYGLQAMIFI), and 1668–1688 (MIAWMIFYICAIPVFSFLLPL). Residues 1826 to 1847 (AHRPSLDDTSSFHQPYQPAPRP) are disordered. The region spanning 1875-1930 (AITDSQLERSIRKICANAELDKLTKKGVRKELEREYGVELTERREAINRLVEKVLT) is the DEK-C domain.

In the N-terminal section; belongs to the TRAFAC class CC myosin-kinesin ATPase superfamily. Myosin family. This sequence in the C-terminal section; belongs to the chitin synthase family. Class V subfamily.

Its subcellular location is the cell membrane. The protein resides in the cell septum. The protein localises to the cell tip. The enzyme catalyses [(1-&gt;4)-N-acetyl-beta-D-glucosaminyl](n) + UDP-N-acetyl-alpha-D-glucosamine = [(1-&gt;4)-N-acetyl-beta-D-glucosaminyl](n+1) + UDP + H(+). Its function is as follows. Polymerizes chitin, a structural polymer of the cell wall and septum, by transferring the sugar moiety of UDP-GlcNAc to the non-reducing end of the growing chitin polymer. Produces a large proportion of the chitin that is not deacetylated to chitosan. This chain is Chitin synthase 5, found in Cryptococcus neoformans var. grubii serotype A (strain H99 / ATCC 208821 / CBS 10515 / FGSC 9487) (Filobasidiella neoformans var. grubii).